The chain runs to 295 residues: Histamine N-methyltransferase (295 aa).

A substrate-binding site is contributed by Glu28. 5 residues coordinate S-adenosyl-L-methionine: Gly60, Glu89, Gln94, Ser120, and Ile143. Asn284 is a binding site for substrate.

This sequence belongs to the class I-like SAM-binding methyltransferase superfamily. HNMT family. Monomer.

It is found in the cytoplasm. The catalysed reaction is histamine + S-adenosyl-L-methionine = N(tau)-methylhistamine + S-adenosyl-L-homocysteine + H(+). Its function is as follows. Inactivates histamine by N-methylation. Plays an important role in degrading histamine and in regulating the airway response to histamine. This is Histamine N-methyltransferase (Hnmt) from Mus musculus (Mouse).